The following is a 409-amino-acid chain: Probable beta-1,3-galactosyltransferase 3 (409 aa).

Residues 20-42 (WTFLLCFGSFCFGILFTDRMWII) traverse the membrane as a helical; Signal-anchor for type II membrane protein segment.

The protein belongs to the glycosyltransferase 31 family. It depends on Mn(2+) as a cofactor.

It localises to the golgi apparatus membrane. It functions in the pathway protein modification; protein glycosylation. In terms of biological role, beta-1,3-galactosyltransferase that transfers galactose from UDP-galactose to substrates with a terminal glycosyl residue. In Arabidopsis thaliana (Mouse-ear cress), this protein is Probable beta-1,3-galactosyltransferase 3 (B3GALT3).